Reading from the N-terminus, the 362-residue chain is Alcohol dehydrogenase 13 (362 aa).

The Zn(2+) site is built by Cys51, His73, Cys104, Cys107, Cys110, Cys118, and Cys168. His73 contacts substrate. NAD(+) contacts are provided by residues 193–198 (GLGGLG) and 280–282 (VGA).

Belongs to the zinc-containing alcohol dehydrogenase family. Class-III subfamily. As to quaternary structure, homodimer. The cofactor is Zn(2+).

In Catharanthus roseus (Madagascar periwinkle), this protein is Alcohol dehydrogenase 13.